The chain runs to 733 residues: Folic acid synthesis protein fol1 (733 aa).

2 DHNA regions span residues 55 to 167 and 179 to 277; these read VVVE…YAER and IEFS…QIYR. Position 281 is a phosphotyrosine (tyrosine 281). The HPK stretch occupies residues 295–454; it reads NKIAYLSFGS…LPSQGIRLYS (160 aa). The 260-residue stretch at 465–724 folds into the Pterin-binding domain; that stretch reads ALTMGILNVT…DTKEMSKVVG (260 aa). Residues 467–733 form a DHPS region; the sequence is TMGILNVTPD…GMANAIRYVP (267 aa). Asparagine 472 serves as a coordination point for Mg(2+). Residues threonine 511, aspartate 546, asparagine 565, aspartate 637, lysine 677, and 712 to 714 contribute to the (7,8-dihydropterin-6-yl)methyl diphosphate site; that span reads RVH.

It in the N-terminal section; belongs to the DHNA family. This sequence in the central section; belongs to the HPPK family. The protein in the C-terminal section; belongs to the DHPS family. Requires Mg(2+) as cofactor.

Its subcellular location is the cytoplasm. The enzyme catalyses 7,8-dihydroneopterin = 6-hydroxymethyl-7,8-dihydropterin + glycolaldehyde. It carries out the reaction 6-hydroxymethyl-7,8-dihydropterin + ATP = (7,8-dihydropterin-6-yl)methyl diphosphate + AMP + H(+). It catalyses the reaction (7,8-dihydropterin-6-yl)methyl diphosphate + 4-aminobenzoate = 7,8-dihydropteroate + diphosphate. The protein operates within cofactor biosynthesis; tetrahydrofolate biosynthesis; 2-amino-4-hydroxy-6-hydroxymethyl-7,8-dihydropteridine diphosphate from 7,8-dihydroneopterin triphosphate: step 3/4. It participates in cofactor biosynthesis; tetrahydrofolate biosynthesis; 2-amino-4-hydroxy-6-hydroxymethyl-7,8-dihydropteridine diphosphate from 7,8-dihydroneopterin triphosphate: step 4/4. Its pathway is cofactor biosynthesis; tetrahydrofolate biosynthesis; 7,8-dihydrofolate from 2-amino-4-hydroxy-6-hydroxymethyl-7,8-dihydropteridine diphosphate and 4-aminobenzoate: step 1/2. Its function is as follows. Catalyzes three sequential steps of tetrahydrofolate biosynthesis. The sequence is that of Folic acid synthesis protein fol1 (fol1) from Schizosaccharomyces pombe (strain 972 / ATCC 24843) (Fission yeast).